We begin with the raw amino-acid sequence, 316 residues long: Apolipoprotein E (316 aa).

An N-terminal signal peptide occupies residues methionine 1–alanine 18. Tandem repeats lie at residues valine 76–glycine 97, proline 98–glycine 119, alanine 120–glycine 141, glutamine 142–methionine 163, arginine 164–glutamate 185, arginine 186–alanine 207, asparagine 208–arginine 229, and glycine 230–glutamate 251. The 8 X 22 AA approximate tandem repeats stretch occupies residues valine 76 to glutamate 251. Methionine 139 carries the post-translational modification Methionine sulfoxide. Residue serine 143 is modified to Phosphoserine. An LDL and other lipoprotein receptors binding region spans residues histidine 154–arginine 164. Position 158–161 (leucine 158–arginine 161) interacts with heparin. The lipid-binding and lipoprotein association stretch occupies residues threonine 206–methionine 286. Glycine 225–leucine 232 contacts heparin. The homooligomerization stretch occupies residues glutamine 262–glutamine 316. Residues arginine 274–methionine 286 are specificity for association with VLDL.

Belongs to the apolipoprotein A1/A4/E family. In terms of assembly, homotetramer. May interact with ABCA1; functionally associated with ABCA1 in the biogenesis of HDLs. May interact with APP/A4 amyloid-beta peptide; the interaction is extremely stable in vitro but its physiological significance is unclear. May interact with MAPT. May interact with MAP2. In the cerebrospinal fluid, interacts with secreted SORL1. Interacts with PMEL; this allows the loading of PMEL luminal fragment on ILVs to induce fibril nucleation. Post-translationally, APOE exists as multiple glycosylated and sialylated glycoforms within cells and in plasma. The extent of glycosylation and sialylation are tissue and context specific. Glycated in plasma VLDL. In terms of processing, phosphorylated by FAM20C in the extracellular medium.

The protein localises to the secreted. It localises to the extracellular space. Its subcellular location is the extracellular matrix. It is found in the extracellular vesicle. The protein resides in the endosome. The protein localises to the multivesicular body. Functionally, APOE is an apolipoprotein, a protein associating with lipid particles, that mainly functions in lipoprotein-mediated lipid transport between organs via the plasma and interstitial fluids. APOE is a core component of plasma lipoproteins and is involved in their production, conversion and clearance. Apolipoproteins are amphipathic molecules that interact both with lipids of the lipoprotein particle core and the aqueous environment of the plasma. As such, APOE associates with chylomicrons, chylomicron remnants, very low density lipoproteins (VLDL) and intermediate density lipoproteins (IDL) but shows a preferential binding to high-density lipoproteins (HDL). It also binds a wide range of cellular receptors including the LDL receptor/LDLR, the LDL receptor-related proteins LRP1, LRP2 and LRP8 and the very low-density lipoprotein receptor/VLDLR that mediate the cellular uptake of the APOE-containing lipoprotein particles. Finally, APOE also has a heparin-binding activity and binds heparan-sulfate proteoglycans on the surface of cells, a property that supports the capture and the receptor-mediated uptake of APOE-containing lipoproteins by cells. A main function of APOE is to mediate lipoprotein clearance through the uptake of chylomicrons, VLDLs, and HDLs by hepatocytes. APOE is also involved in the biosynthesis by the liver of VLDLs as well as their uptake by peripheral tissues ensuring the delivery of triglycerides and energy storage in muscle, heart and adipose tissues. By participating in the lipoprotein-mediated distribution of lipids among tissues, APOE plays a critical role in plasma and tissues lipid homeostasis. APOE is also involved in two steps of reverse cholesterol transport, the HDLs-mediated transport of cholesterol from peripheral tissues to the liver, and thereby plays an important role in cholesterol homeostasis. First, it is functionally associated with ABCA1 in the biogenesis of HDLs in tissues. Second, it is enriched in circulating HDLs and mediates their uptake by hepatocytes. APOE also plays an important role in lipid transport in the central nervous system, regulating neuron survival and sprouting. This Onychomys torridus (Southern grasshopper mouse) protein is Apolipoprotein E (Apoe).